The following is a 461-amino-acid chain: Cysteine--tRNA ligase (461 aa).

Zn(2+) is bound at residue Cys-28. The 'HIGH' region signature appears at 30 to 40 (VTIYDLCHIGH). Zn(2+)-binding residues include Cys-211, His-236, and Glu-240. The short motif at 268–272 (KMSKS) is the 'KMSKS' region element. Lys-271 contributes to the ATP binding site.

Belongs to the class-I aminoacyl-tRNA synthetase family. Monomer. Zn(2+) serves as cofactor.

The protein localises to the cytoplasm. It carries out the reaction tRNA(Cys) + L-cysteine + ATP = L-cysteinyl-tRNA(Cys) + AMP + diphosphate. The polypeptide is Cysteine--tRNA ligase (Aliivibrio fischeri (strain ATCC 700601 / ES114) (Vibrio fischeri)).